Reading from the N-terminus, the 1498-residue chain is MNGGKECDGGDKEGGLAAIQVPVGWQRRVDHNGVLYISPSGSLLSCLDQVKTYLLTDGTCKCGLECPLILPKVFNFDPGAAVKQRTAEDVKADDDVTKLCIHKRKIIAVATLHQSMEAPHPSLVLTSPGGGTNATPVVPSRAATPRSVRNKSHEGITNSVMPECKNPFKLMTGSSNAMGRLYMQDLPGSQQQELHPVYPRQRLGSSEHGQKSPFRGSHGGLPSPASSGSQIYGDGSISPRTDPLGSPDVFTRNNPGFHGAPNSSPIHLNRTPLSPPSVMLHGSPVQSSCAMAGRTNIPLSPTLTTKSPVMKKPMCNFSTNMEIPRAMFHHKPPQGPPPPPPPSCALQKKPLTSEKDPLGILDPIPSKPVNQNPIIINPTSFHSNVHSQVPVMNVSMPPAVVPLPSNLPLPTVKPGHMNHGSHVQRIQHSASTSLSPSPVTSPVHMMGTGIGRIEASPQRSRSSSTSSDHGNFMMPPVGPQATCSGIKVPPRSPRSTIGSPRPSMPSSPSTKSDGHHQYKDIPNPLIAGMSNVLNTPSSAAFPTAPAGNGSVKSQPGLLGMPLNQILNQHNAASFPASSLLSAAAKAQLANQNKLAGNNSSSSNNSGAVASSGNTEGHSTLNTMFPPTANMLLPTGEGQSGRAALRDKLMSQQKDSLRKRKQPPTTVLSLLRQSQMDSSAAPKPGPDLLRKHGQGSFPISSMSQLLQSMSCQSSHLSSNSTPGCGGSNTALPCSANQLHFPDPNMNSTVLQNSLTQSIPLRGEAVHCHNANTNFVHSNSPVPNHHLAGLINQIQASGNCGMLSQSGMALGNSLHPNPPQSRISTSSTPVIPNSIVSSYNQTSSEAGGSSLPSSIAIAGSNHPAITKTTSVLQDGVIVTTAAGNPLQSQLPIGSDFPFVGQEHALHFPSNSTANNHLPHPLNPSLLSSLPISLPVNQQHLLNQNLLNILQPSAGEGDISSINNSLNNHQLTHLQSLLNSNQMFPPNQQPQQHLLQGHQNLQAFQGQPTVPCPANNNPMACLFQNFQVRMQGDAALLNKRISTQPGLTTLPENPNLALPHFQDTPCELQPRIDLGQPMKDGLVMGGQGDASVDAIYKAVVDAASKGMQVVITTAVNSTTQISPIPALSAMSAFTASIGDPLNLSSAVSAVIHGRNMGGVDHDGRLRNARGARLPKNIDHGKNSSEGDGFECFKSASCHTSRKQWDGEQSPRGERNRWKYEEFLDHPGHIHSSPCHERPNNVSTLPFLAGEQHPILLPPRNCQGDKILEENFRYNNYKRTMMSFKERLESTVERCTHINGNRPRQSRGFGELLGTAKQDLVLEGQSPGSSNSLESSLVKDYIHYNGDFNAKTINGCVPSPSDAKSISSEDDLRNPDSPSSHELIHYRPRTFNVGDLVWGQIKGLTSWPGKFIREDDVHNSCQQSPEEGKVEPEKLKTLTEGLEAYSRVRKRSRKSGKLNNHLEAAIHEAMSELDKMSGTVHQIPQGDRQMRPPKPKRRKISR.

One can recognise an MBD domain in the interval 11–81 (DKEGGLAAIQ…KVFNFDPGAA (71 aa)). Positions 57–68 (DGTCKCGLECPL) are required for interaction with ASXL1/2/3. Disordered stretches follow at residues 199 to 274 (PRQR…TPLS), 329 to 350 (HHKPPQGPPPPPPPSCALQKKP), 452 to 521 (RIEA…YKDI), 594 to 642 (LAGN…SGRA), and 1350 to 1377 (NGCVPSPSDAKSISSEDDLRNPDSPSSH). Pro residues predominate over residues 333–343 (PQGPPPPPPPS). Low complexity-rich tracts occupy residues 499 to 511 (SPRPSMPSSPSTK) and 594 to 613 (LAGNNSSSSNNSGAVASSGN). The segment covering 614-624 (TEGHSTLNTMF) has biased composition (polar residues). The 25-residue stretch at 1385–1409 (RTFNVGDLVWGQIKGLTSWPGKFIR) folds into the PWWP domain. The interval 1473–1498 (SGTVHQIPQGDRQMRPPKPKRRKISR) is disordered. Residues 1487–1498 (RPPKPKRRKISR) show a composition bias toward basic residues.

As to quaternary structure, core component of the polycomb repressive deubiquitinase (PR-DUB) complex, at least composed of BAP1, one of ASXL1, ASXL2 or (probably) ASXL3, and one of MBD5 or MBD6. Distinct combinations of ASXL and MBD proteins may preferentially bind specific histone modification marks. The PR-DUB core associates with a number of accessory proteins, including FOXK1, FOXK2, KDM1B, HCFC1 and OGT; KDM1B specifically associates with ASXL2 PR-DUB complexes. Interacts (via MBD domain) with ASXL1, ASXL2 and ASXL3 (via PHD domain); the interaction is probably direct, mediates association with other PR-DUB complex core components. In terms of tissue distribution, expressed at highest levels in adult testis and Brain. As to expression, expressed at highest levels in the oocyte.

Its subcellular location is the nucleus. It is found in the chromosome. Functionally, non-catalytic component of the polycomb repressive deubiquitinase (PR-DUB) complex, a complex that specifically mediates deubiquitination of histone H2A monoubiquitinated at 'Lys-120' (H2AK119ub1). Important for stability of PR-DUB components and stimulating its ubiquitinase activity. As part of the PR-DUB complex, associates with chromatin enriched in histone marks H3K4me1, H3K4me3, and H3K27Ac, but not in H3K27me3. The PR-DUB complex is an epigenetic regulator of gene expression, including genes involved in cell growth and survivability. MBD5 and MBD6 containing complexes associate with distinct chromatin regions enriched in genes involved in different pathways. Heterochromatin recruitment is not mediated by DNA methylation. The PR-DUB complex is an epigenetic regulator of gene expression, including genes involved in development, cell communication, signaling, cell proliferation and cell viability. This Mus musculus (Mouse) protein is Methyl-CpG-binding domain protein 5 (Mbd5).